Consider the following 456-residue polypeptide: Histidine--tRNA ligase (456 aa).

This sequence belongs to the class-II aminoacyl-tRNA synthetase family. Homodimer.

The protein localises to the cytoplasm. It carries out the reaction tRNA(His) + L-histidine + ATP = L-histidyl-tRNA(His) + AMP + diphosphate + H(+). This is Histidine--tRNA ligase from Cupriavidus taiwanensis (strain DSM 17343 / BCRC 17206 / CCUG 44338 / CIP 107171 / LMG 19424 / R1) (Ralstonia taiwanensis (strain LMG 19424)).